The chain runs to 317 residues: Putative toluene-4-sulfonate monooxygenase system reductase subunit TsaB2 (317 aa).

Positions 4–106 constitute an FAD-binding FR-type domain; it reads DVPVTVAAVR…SAPRNLFEMA (103 aa). 110 to 220 lines the NAD(+) pocket; it reads RRVLLLAGGI…PGSVRMERFK (111 aa). Residues 232–317 enclose the 2Fe-2S ferredoxin-type domain; sequence FELVLQRAGL…CGGGRLVLDI (86 aa). 3 residues coordinate [2Fe-2S] cluster: Cys-266, Cys-271, and Cys-274.

As to quaternary structure, monomer. Part of the p-toluenesulfonate methyl-monooxygenase complex TsaBM, comprising the reductase TsaB and the oxygenase TsaM. Requires FMN as cofactor.

Involved in the toluene-4-sulfonate degradation pathway. In Comamonas testosteroni (Pseudomonas testosteroni), this protein is Putative toluene-4-sulfonate monooxygenase system reductase subunit TsaB2 (tsaB2).